The following is a 310-amino-acid chain: Zinc finger CCCH domain-containing protein 14 (310 aa).

The tract at residues 56–75 (ESLSPSPPSSSSPPSRVDTT) is disordered. Residues 84-129 (KLILEYDELNEHYELCLNRLQSLMTELDSLRHENDSLRFENSDLLK) adopt a coiled-coil conformation. Over residues 155–167 (QISDSRSAKRNNQ) the composition is skewed to basic and acidic residues. The segment at 155-174 (QISDSRSAKRNNQERNSLPK) is disordered. C3H1-type zinc fingers lie at residues 232-260 (MMKT…HGID) and 270-298 (RYKT…HSLT).

As to expression, highly expressed in secondary cell wall-forming tissues and the xylem cells of roots. Expressed predominantly in inflorescence stems, flowers and siliques. Highly expressed in the basal portion of stems, where cells are undergoing secondary cell wall thickening.

Functions probably as a transcriptional factor that activates genes involved in secondary cell wall biosynthesis. May play a role in both transcriptional and post-transcriptional regulation. Binds to ssDNA, dsDNA, and ribohomopolymers in vitro. Maybe involved in post-transcriptional regulation of its target genes. Targets RNA of a polygalacturonase, a well-known cell wall modifying gene. Functions redudantly with C3H15 to regulate secondary cell wall formation. C3H14 and C3H15 have overlapping roles in the regulation of secondary cell wall formation and anther development. C3H14 may contribute more to secondary cell wall thickening while C3H15 could be more important in anther development. May regulate at both the transcriptional and post-transcriptional levels the expression of many genes involved in various biological processes, particularly those associated with cell wall metabolism and pollen development. This Arabidopsis thaliana (Mouse-ear cress) protein is Zinc finger CCCH domain-containing protein 14.